Reading from the N-terminus, the 185-residue chain is Glycine-rich cell wall structural protein 2 (185 aa).

The signal sequence occupies residues 1-27 (MATTKHLALAILVLLSIGMTTSARTLL). Positions 149–185 (GYGSGGGGGGGGGQGGGSGSGSGSGYGSGSGGGNGHH) are disordered.

It localises to the secreted. It is found in the cell wall. Responsible for plasticity of the cell wall. The protein is Glycine-rich cell wall structural protein 2 (GRP0.9) of Oryza sativa subsp. indica (Rice).